Consider the following 207-residue polypeptide: 2,3-bisphosphoglycerate-dependent phosphoglycerate mutase (207 aa).

Substrate is bound by residues 9-16, 22-23, Arg-61, 88-91, Lys-99, 115-116, and 159-160; these read RHGQSDWN, TG, ERDY, RR, and GN. The Tele-phosphohistidine intermediate role is filled by His-10. Glu-88 serves as the catalytic Proton donor/acceptor.

Belongs to the phosphoglycerate mutase family. BPG-dependent PGAM subfamily. As to quaternary structure, homodimer.

It carries out the reaction (2R)-2-phosphoglycerate = (2R)-3-phosphoglycerate. The protein operates within carbohydrate degradation; glycolysis; pyruvate from D-glyceraldehyde 3-phosphate: step 3/5. In terms of biological role, catalyzes the interconversion of 2-phosphoglycerate and 3-phosphoglycerate. The polypeptide is 2,3-bisphosphoglycerate-dependent phosphoglycerate mutase (Beijerinckia indica subsp. indica (strain ATCC 9039 / DSM 1715 / NCIMB 8712)).